Here is a 464-residue protein sequence, read N- to C-terminus: MRESEDSPSPKRQRLSHSVFDYTSASPAPSPPMRPWEMTSNRQPPSVRPNQHHFSGERCNTPARNRRSPPVRRQRGRRERLSRHNSISQDENYHHLPYAQQQAIEEPRAFHPPNVSPRLLHPAAHPPQQNAVMVDIHDQLHQGTVPVSYTVTTVAPHGLPLCTGQHIPACSTQQVPGCSVVFSGQHLPVCSVPPPMLQACSVQHLPVPYAAFPPLISSDPFLIHPPHLSPHHPPHLPPPGQFVPFQTQQSRSPLQRIENEVELLGEHLQVGSFTYPPSAHPPTLPPSAPLQFLTHDPLHQEVSFGVPYPPFMPRRLTGRSRYRSQQPMPPPPYHPSLLPYVLSMLPVPPAVGPTFSFELDVEDGEVENYEALLNLAERLGEAKPRGLTKADIEQLPSYRFNPSNHQSEQTLCVVCMCDFESRQLLRVLPCNHEFHAKCVDKWLKGNRTCPICRADASEVHRDSE.

Positions 1–94 (MRESEDSPSP…NSISQDENYH (94 aa)) are disordered. Positions 6–20 (DSPSPKRQRLSHSVF) match the Bipartite nuclear localization signal 1 motif. The span at 38–53 (MTSNRQPPSVRPNQHH) shows a compositional bias: polar residues. A Bipartite nuclear localization signal 2 motif is present at residues 64-79 (RNRRSPPVRRQRGRRE). Residues 64–83 (RNRRSPPVRRQRGRRERLSR) are compositionally biased toward basic residues. The RING-type zinc-finger motif lies at 412 to 453 (CVVCMCDFESRQLLRVLPCNHEFHAKCVDKWLKGNRTCPICR).

The protein resides in the nucleus. The enzyme catalyses S-ubiquitinyl-[E2 ubiquitin-conjugating enzyme]-L-cysteine + [acceptor protein]-L-lysine = [E2 ubiquitin-conjugating enzyme]-L-cysteine + N(6)-ubiquitinyl-[acceptor protein]-L-lysine.. Its pathway is protein modification; protein ubiquitination. Its function is as follows. Acts as an E3 ubiquitin-protein ligase able to ubiquitinate p53/TP53 which promotes its relocalization to discrete foci associated with PML nuclear bodies. Exhibits preference for UBE2D2 as a E2 enzyme. In Mus musculus (Mouse), this protein is E3 ubiquitin-protein ligase RNF38.